We begin with the raw amino-acid sequence, 257 residues long: Dihydroorotate dehydrogenase B (NAD(+)), electron transfer subunit (257 aa).

Residues 2–102 (IGRERMTVAS…LGPLGNGFPL (101 aa)) form the FAD-binding FR-type domain. FAD contacts are provided by residues 53–56 (RPLS), 70–72 (IYR), and 77–78 (GT). Residues Cys221, Cys226, Cys229, and Cys244 each coordinate [2Fe-2S] cluster.

This sequence belongs to the PyrK family. In terms of assembly, heterotetramer of 2 PyrK and 2 PyrD type B subunits. [2Fe-2S] cluster is required as a cofactor. Requires FAD as cofactor.

It participates in pyrimidine metabolism; UMP biosynthesis via de novo pathway; orotate from (S)-dihydroorotate (NAD(+) route): step 1/1. In terms of biological role, responsible for channeling the electrons from the oxidation of dihydroorotate from the FMN redox center in the PyrD type B subunit to the ultimate electron acceptor NAD(+). The polypeptide is Dihydroorotate dehydrogenase B (NAD(+)), electron transfer subunit (Bacillus caldolyticus).